Consider the following 247-residue polypeptide: Triosephosphate isomerase (247 aa).

2 residues coordinate substrate: Asn-10 and Lys-12. Residue His-94 is the Electrophile of the active site. The active-site Proton acceptor is the Glu-164.

This sequence belongs to the triosephosphate isomerase family. Homodimer.

It localises to the cytoplasm. It carries out the reaction D-glyceraldehyde 3-phosphate = dihydroxyacetone phosphate. It catalyses the reaction dihydroxyacetone phosphate = methylglyoxal + phosphate. Its pathway is carbohydrate biosynthesis; gluconeogenesis. It participates in carbohydrate degradation; glycolysis; D-glyceraldehyde 3-phosphate from glycerone phosphate: step 1/1. Functionally, triosephosphate isomerase is an extremely efficient metabolic enzyme that catalyzes the interconversion between dihydroxyacetone phosphate (DHAP) and D-glyceraldehyde-3-phosphate (G3P) in glycolysis and gluconeogenesis. In terms of biological role, it is also responsible for the non-negligible production of methylglyoxal a reactive cytotoxic side-product that modifies and can alter proteins, DNA and lipids. This is Triosephosphate isomerase from Latimeria chalumnae (Coelacanth).